Here is a 745-residue protein sequence, read N- to C-terminus: Dipeptidyl aminopeptidase 4 (745 aa).

An N-terminal signal peptide occupies residues 1 to 22 (MRLALFALFALMTVATALPAHA). Positions 208 and 209 each coordinate substrate. Active-site charge relay system residues include serine 613, aspartate 689, and histidine 721.

Belongs to the peptidase S9B family. In terms of assembly, homodimer.

It is found in the cytoplasm. It localises to the periplasm. The catalysed reaction is Release of an N-terminal dipeptide, Xaa-Yaa-|-Zaa-, from a polypeptide, preferentially when Yaa is Pro, provided Zaa is neither Pro nor hydroxyproline.. Completely inhibited by the serine protease inhibitor diisopropyl fluorophosphate (DFP) and moderately by N-tosyl-L-phenyl-alanyl chloromethyl ketone (TPCK). Somewhat inhibited by phenylmethanesulfonyl fluoride (PMSF). Activity is not affected by thiol- or metalloprotease inhibitors, such as iodoacetate (IAA), EDTA, N-tosyl-L-lysyl chloromethyl ketone (TLCK), o-phenanthlorine, N-ethylmaleimide (NEM) or dithiothreitol (DTT). Its function is as follows. Catalyzes the sequential release of Tyr-Pro, Phe-Pro and Gly-Pro from the N-terminus of peptides and proteins. Is able to cleaves bioactive peptide beta-casomorphin. This Pseudoxanthomonas mexicana protein is Dipeptidyl aminopeptidase 4.